We begin with the raw amino-acid sequence, 192 residues long: Thymidine kinase (192 aa).

Residues 9 to 16 (SAMNAGKS) and 87 to 90 (DECQ) each bind ATP. Residue E88 is the Proton acceptor of the active site. C145, C147, C182, and H185 together coordinate Zn(2+).

This sequence belongs to the thymidine kinase family. As to quaternary structure, homotetramer.

The protein resides in the cytoplasm. It catalyses the reaction thymidine + ATP = dTMP + ADP + H(+). The chain is Thymidine kinase from Aliivibrio fischeri (strain ATCC 700601 / ES114) (Vibrio fischeri).